We begin with the raw amino-acid sequence, 1947 residues long: Sodium channel protein type 3 subunit alpha (1947 aa).

Residues 1–128 (MAQALLVPPG…KIAIKILVHS (128 aa)) lie on the Cytoplasmic side of the membrane. Residues 28–60 (RAAEEKAKKPKKEQDIDDENKPKPNSDLEAGKN) form a disordered region. The segment covering 46–57 (ENKPKPNSDLEA) has biased composition (basic and acidic residues). One copy of the I repeat lies at 110–455 (ILTPLNPVRK…QQMLEQLKKQ (346 aa)). A helical transmembrane segment spans residues 129–146 (LFSMLIMCTILTNCVFMT). Over 147-152 (LSNPPD) the chain is Extracellular. A helical transmembrane segment spans residues 153–174 (WTKNVEYTFTGIYTFESLIKIL). At 175–188 (ARGFCLEDFTFLRD) the chain is on the cytoplasmic side. Residues 189 to 206 (PWNWLDFSVIVMAYVTEF) form a helical membrane-spanning segment. The Extracellular segment spans residues 207 to 213 (VDLGNVS). Asn211 carries an N-linked (GlcNAc...) asparagine glycan. Residues 214 to 235 (ALRTFRVLRALKTISVIPGLKT) form a helical membrane-spanning segment. At 236-249 (IVGALIQSVKKLSD) the chain is on the cytoplasmic side. A helical membrane pass occupies residues 250–269 (VMILTVFCLSVFALIGLQLF). Residues 270–369 (MGNLRNKCLQ…NYGYTSFDTF (100 aa)) lie on the Extracellular side of the membrane. 5 N-linked (GlcNAc...) asparagine glycosylation sites follow: Asn290, Asn296, Asn302, Asn307, and Asn339. Residues 370 to 386 (SWAFLSLFRLMTQDYWE) constitute an intramembrane region (pore-forming). Over 387-397 (NLYQLTLRAAG) the chain is Extracellular. Residues 398-424 (KTYMIFFVLVIFLGSFYLVNLILAVVA) form a helical membrane-spanning segment. The Cytoplasmic segment spans residues 425-712 (MAYEEQNQAT…LVNLIVMDPF (288 aa)). Phosphoserine occurs at positions 484, 485, and 486. Disordered stretches follow at residues 493-529 (SKSA…SESE) and 587-632 (VGSE…ETEV). Over residues 500 to 509 (RNRRKKRRQR) the composition is skewed to basic residues. 2 stretches are compositionally biased toward basic and acidic residues: residues 510-529 (EHLE…SESE) and 596-622 (DEHS…ERRN). Residues 693-965 (CCDSWLKVKH…QIAVGRMQKG (273 aa)) form an II repeat. A helical membrane pass occupies residues 713–730 (VDLAITICIVLNTLFMAM). The Extracellular segment spans residues 731–738 (EHYPMTEQ). Residues 739-763 (FSSVLTVGNLVFTGIFTAEMVLKII) form a helical membrane-spanning segment. Over 764–773 (AMDPYYYFQE) the chain is Cytoplasmic. Residues 774–793 (GWNIFDGIIVSLSLMELGLA) traverse the membrane as a helical segment. At 794–797 (NVEG) the chain is on the extracellular side. A helical transmembrane segment spans residues 798–816 (LSVLRSFRLLRVFKLAKSW). The Cytoplasmic segment spans residues 817–834 (PTLNMLIKIIGNSVGALG). Residues 835-855 (NLTLVLAIIVFIFAVVGMQLF) traverse the membrane as a helical segment. Residues 856-880 (GKSYKECVCKINEDCKLPRWHMNDF) are Extracellular-facing. A disulfide bridge links Cys864 with Cys870. Positions 881 to 896 (FHSFLIVFRVLCGEWI) form an intramembrane region, pore-forming. Over 897 to 907 (ETMWDCMEVAG) the chain is Extracellular. Cysteines 902 and 911 form a disulfide. Residues 908–934 (QTMCLIVFMLVMVIGNLVVLNLFLALL) form a helical membrane-spanning segment. Residues 935-1157 (LSSFSSDNLA…RKTCYSIVEH (223 aa)) are Cytoplasmic-facing. The tract at residues 1070–1113 (EEFSSESELEESKEKLNATSSSEGSTVDVAPPREGEQAEIEPEE) is disordered. Residues 1140 to 1451 (KGKIWWNLRK…KKYYNAMKKL (312 aa)) form an III repeat. Residues 1158–1178 (NWFETFIVFMILLSSGALAFE) form a helical membrane-spanning segment. The Extracellular segment spans residues 1179 to 1190 (DIYIEQRKTIKT). A helical transmembrane segment spans residues 1191-1212 (MLEYADKVFTYIFILEMLLKWV). Residues 1213–1218 (AYGFQT) are Cytoplasmic-facing. Residues 1219–1244 (YFTNAWCWLDFLIVDVSLVSLVANAL) traverse the membrane as a helical segment. The Extracellular portion of the chain corresponds to 1245-1253 (GYSELGAIK). A helical transmembrane segment spans residues 1254–1272 (SLRTLRALRPLRALSRFEG). Topologically, residues 1273–1285 (MRVVVNALVGAIP) are cytoplasmic. The helical transmembrane segment at 1286-1308 (SIMNVLLVCLIFWLIFSIMGVNL) threads the bilayer. The Extracellular portion of the chain corresponds to 1309 to 1354 (FAGKFYHCVNMTTGSMFDMSEVNNFSDCQALGKQARWKNVKVNFDN). Cys1316 and Cys1336 are oxidised to a cystine. N-linked (GlcNAc...) asparagine glycans are attached at residues Asn1318 and Asn1332. Residues 1355–1371 (VGAGYLALLQVATFKGW) constitute an intramembrane region (pore-forming). Topologically, residues 1372-1394 (MDIMYAAVDSRDVKLQPVYEENL) are extracellular. The chain crosses the membrane as a helical span at residues 1395-1420 (YMYLYFVIFIIFGSFFTLNLFIGVII). At 1421–1478 (DNFNQQKKKFGGQDIFMTEEQKKYYNAMKKLGSKKPQKPIPRPANKFQGMVFDFVTRQ) the chain is on the cytoplasmic side. Phosphoserine is present on Ser1453. An IV repeat occupies 1460 to 1758 (IPRPANKFQG…WEKFDPDATQ (299 aa)). The chain crosses the membrane as a helical span at residues 1479–1497 (VFDISIMILICLNMVTMMV). Topologically, residues 1498–1505 (ETDDQSKY) are extracellular. The chain crosses the membrane as a helical span at residues 1506 to 1529 (MTLVLSRINLVFIVLFTGEFLLKL). Over 1530 to 1539 (ISLRYYYFTI) the chain is Cytoplasmic. The chain crosses the membrane as a helical span at residues 1540–1557 (GWNIFDFVVVILSIVGMF). At 1558 to 1569 (LAELIEKYFVSP) the chain is on the extracellular side. A helical transmembrane segment spans residues 1570–1592 (TLFRVIRLARIGRILRLIKGAKG). At 1593-1605 (IRTLLFALMMSLP) the chain is on the cytoplasmic side. Residues 1606-1629 (ALFNIGLLLFLVMFIYAIFGMSNF) traverse the membrane as a helical segment. At 1630–1651 (AYVKKEAGIDDMFNFETFGNSM) the chain is on the extracellular side. The segment at residues 1652-1664 (ICLFQITTSAGWD) is an intramembrane region (pore-forming). At 1665–1696 (GLLAPILNSAPPDCDPDAIHPGSSVKGDCGNP) the chain is on the extracellular side. A helical membrane pass occupies residues 1697–1722 (SVGIFFFVSYIIISFLVVVNMYIAVI). Residues 1723–1947 (LENFSVATEE…PEKESKGKEV (225 aa)) lie on the Cytoplasmic side of the membrane. The region spanning 1852-1881 (EEVSAAIIQRNYRCYLLKQRLKNISNTYDK) is the IQ domain. The tract at residues 1901 to 1947 (LNGNSTPEKTDGSSSTTSPPSYDSVTKPDKEKFEKDKPEKESKGKEV) is disordered. Residues 1926–1947 (TKPDKEKFEKDKPEKESKGKEV) show a composition bias toward basic and acidic residues.

The protein belongs to the sodium channel (TC 1.A.1.10) family. Nav1.3/SCN3A subfamily. Heterooligomer of an alpha subunit, SCN3A, and 1 to 3 regulatory beta subunits including SCN1B and SCN2B; disulfide-linked with some beta subunits like SCN2B. Interacts with NEDD4L; could regulate expression of SCN3A at the plasma membrane through ubiquitination-regulated endocytosis. May be ubiquitinated by NEDD4L; which would promote its endocytosis. In terms of processing, phosphorylation at Ser-1453 in a highly conserved cytoplasmic loop slows inactivation of the channel and reduces peak sodium currents. Expressed in enterochromaffin cells in both colon and small bowel (at protein level). Expressed in pancreatic alpha and beta cells.

The protein localises to the cell membrane. The protein resides in the basal cell membrane. It carries out the reaction Na(+)(in) = Na(+)(out). Its function is as follows. Pore-forming subunit of Nav1.3, a voltage-gated sodium (Nav) channel that directly mediates the depolarizing phase of action potentials in excitable membranes. Navs, also called VGSCs (voltage-gated sodium channels) or VDSCs (voltage-dependent sodium channels), operate by switching between closed and open conformations depending on the voltage difference across the membrane. In the open conformation they allow Na(+) ions to selectively pass through the pore, along their electrochemical gradient. The influx of Na+ ions provokes membrane depolarization, initiating the propagation of electrical signals throughout cells and tissues. In some secretory cell types, it also participates in cell excitability through membrane depolarization and regulates cells responsiveness to stimuli triggering secretion. For instance, it controls the release of serotonin/5-hydroxytryptamine by enterochromaffin cells and is required for both glucagon- and glucose-induced insulin secretion in pancreatic endocrine cells. In Mus musculus (Mouse), this protein is Sodium channel protein type 3 subunit alpha.